A 309-amino-acid chain; its full sequence is Transcription initiation factor IIB 1 (309 aa).

2 tandem repeats follow at residues Asn-125–Leu-208 and Asp-219–Gln-300.

Belongs to the TFIIB family.

Its function is as follows. Stabilizes TBP binding to an archaeal box-A promoter. Also responsible for recruiting RNA polymerase II to the pre-initiation complex (DNA-TBP-TFIIB). The protein is Transcription initiation factor IIB 1 of Saccharolobus solfataricus (strain ATCC 35092 / DSM 1617 / JCM 11322 / P2) (Sulfolobus solfataricus).